A 169-amino-acid polypeptide reads, in one-letter code: Disulfide bond formation protein B (169 aa).

Topologically, residues 1-14 (MSNDTFYLKREKRF) are cytoplasmic. The chain crosses the membrane as a helical span at residues 15–31 (LVLLGIICLSLIGGALY). Residues 32-49 (MQIALGEAPCPLCILQRY) lie on the Periplasmic side of the membrane. An intrachain disulfide couples cysteine 41 to cysteine 44. The helical transmembrane segment at 50–64 (ALLFIAIFAFIGAAM) threads the bilayer. Residues 65–71 (NGRRGVT) are Cytoplasmic-facing. A helical membrane pass occupies residues 72 to 89 (VFEALVTLSALCGIAAAG). Topologically, residues 90–144 (RHAWILAHPSDSCGIDILQPIVDGLPLATLFPTGFQVSGFCTTPYPPVLGLSLAQ) are periplasmic. A disulfide bridge links cysteine 102 with cysteine 130. Residues 145 to 163 (WALTAFVLTAILVPACIIR) form a helical membrane-spanning segment. Over 164–169 (NRRKPY) the chain is Cytoplasmic.

It belongs to the DsbB family.

It localises to the cell inner membrane. In terms of biological role, required for disulfide bond formation in some periplasmic proteins. Acts by oxidizing the DsbA protein. This chain is Disulfide bond formation protein B, found in Pseudomonas syringae pv. tomato (strain ATCC BAA-871 / DC3000).